Here is a 426-residue protein sequence, read N- to C-terminus: Amino acid transporter AVT1H (426 aa).

11 helical membrane-spanning segments follow: residues 34 to 54 (SFLHSVINMVGMLIGLGQLSM), 55 to 75 (PYAVESGGWMSIFLLISFGIL), 110 to 130 (LIVCLFIYLEIFMALVSYTIS), 148 to 168 (HFPAAKLTAVAVAIALPSLWI), 182 to 202 (ILMSAIIFGSVVYTAIFGGVI), 215 to 235 (IPTVSGIYLFSFGGHIVFPNL), 248 to 268 (VSIVSFATVTALYGALAITGA), 292 to 312 (IALWATVLTPMTKYALEFAPL), 340 to 360 (LLLVILALALTVPYFGYVLSL), 363 to 383 (SLVSVTIAVTLPSAFYLKICW), and 392 to 412 (AANLGFVVLGCVLGVLGSFES).

It belongs to the amino acid/polyamine transporter 2 family. Amino acid/auxin permease (AAAP) (TC 2.A.18.5) subfamily.

Its subcellular location is the membrane. This Arabidopsis thaliana (Mouse-ear cress) protein is Amino acid transporter AVT1H.